The primary structure comprises 232 residues: Orotate phosphoribosyltransferase (232 aa).

Residues Arg-107, Lys-108, Lys-111, His-113, and 133–141 (EDLTTAGGS) each bind 5-phospho-alpha-D-ribose 1-diphosphate. An orotate-binding site is contributed by Thr-137.

Belongs to the purine/pyrimidine phosphoribosyltransferase family. PyrE subfamily. As to quaternary structure, homodimer. Mg(2+) is required as a cofactor.

The catalysed reaction is orotidine 5'-phosphate + diphosphate = orotate + 5-phospho-alpha-D-ribose 1-diphosphate. Its pathway is pyrimidine metabolism; UMP biosynthesis via de novo pathway; UMP from orotate: step 1/2. Catalyzes the transfer of a ribosyl phosphate group from 5-phosphoribose 1-diphosphate to orotate, leading to the formation of orotidine monophosphate (OMP). In Sinorhizobium fredii (strain NBRC 101917 / NGR234), this protein is Orotate phosphoribosyltransferase.